The chain runs to 577 residues: Arginine--tRNA ligase (577 aa).

The 'HIGH' region motif lies at 122-132 (PNVAKEMHVGH).

The protein belongs to the class-I aminoacyl-tRNA synthetase family. In terms of assembly, monomer.

The protein localises to the cytoplasm. The enzyme catalyses tRNA(Arg) + L-arginine + ATP = L-arginyl-tRNA(Arg) + AMP + diphosphate. The chain is Arginine--tRNA ligase from Vibrio campbellii (strain ATCC BAA-1116).